Here is a 1004-residue protein sequence, read N- to C-terminus: Protein phosphatase 1 regulatory subunit 12A (1004 aa).

The tract at residues 35 to 38 (KVKF) is important for interaction with PPP1CB. ANK repeat units lie at residues 39–68 (DDGAVFLAACSSGDTEEVLRLLERGADINY), 72–101 (DGLTALHQACIDDNVDMVKFLVENGANINQ), 105–134 (EGWIPLHAAASCGYLDIAEYLISQGAHVGA), 138–164 (EGDTPLDIAEEEAMEELLQNEVNRQGV), 198–227 (SGGTALHVAAAKGYTEVLKLLIQARYDVNI), and 231–260 (DGWTPLHAAAHWGKEEACRILVENLCDMEA). Residues 291–300 (HSEKREKKSP) are compositionally biased toward basic and acidic residues. The disordered stretch occupies residues 291 to 920 (HSEKREKKSP…SYLEDRKPYC (630 aa)). Residues 302–316 (IESTANLDNNQTQKT) show a composition bias toward polar residues. Basic and acidic residues-rich tracts occupy residues 318 to 329 (KNKETLIMEQEK) and 336 to 353 (SLEHEKADEEEEGKKDES). Residues 357–369 (SEEEEDDDSESEA) are compositionally biased toward acidic residues. A compositionally biased stretch (polar residues) spans 378-392 (ANANTTSTQSASMTA). Basic and acidic residues predominate over residues 417 to 427 (SPKEEERKDES). Residues 464-475 (RSASSPRLSSSL) are compositionally biased toward low complexity. The span at 476–486 (DNKEKEKDGKG) shows a compositional bias: basic and acidic residues. The span at 514–525 (SSASSIRSGSSY) shows a compositional bias: low complexity. Residues 528–538 (RKWEEDVKKNS) show a composition bias toward basic and acidic residues. A compositionally biased stretch (polar residues) spans 539–554 (LNEGPTSLNTSYQRSG). Low complexity-rich tracts occupy residues 564-578 (VSSNVPSTASTVTSS) and 587-602 (ASANTTTKSTTGSTSA). Over residues 613–624 (WAEDSTEKEKDS) the composition is skewed to basic and acidic residues. Positions 625 to 659 (VPTAVTVPVAPSVVNAAATTTAMTTATSGTVSSTS) are enriched in low complexity. Over residues 672–681 (VRDEESESQR) the composition is skewed to basic and acidic residues. Residues 682–692 (KARSRQARQSR) are compositionally biased toward basic residues. Thr695 bears the Phosphothreonine; by ROCK2 mark. Positions 717–765 (RTREQENEEKEKEEKEKQDKEKQEEKKESETKDDDYRQRYSRTVEEPYH) are enriched in basic and acidic residues. Positions 770 to 793 (TSTSTSTSSTSSLSTSTSSLSSSS) are enriched in low complexity. A compositionally biased stretch (polar residues) spans 794-808 (QLNRPNSLIGITSAY). The span at 812 to 837 (GTKESEREGGKKEEEKEEDKSQPKSI) shows a compositional bias: basic and acidic residues. The segment covering 838–849 (RERRRPREKRRS) has biased composition (basic residues). Thr850 is modified (phosphothreonine; by ROCK2). Positions 864–880 (QEHQSDSEEGTNKKETQ) are enriched in basic and acidic residues. Polar residues predominate over residues 881-896 (SDSLSRYDTGSLSVSS).

As to quaternary structure, PP1 comprises a catalytic subunit, PPP1CA, PPP1CB or PPP1CC, and one or several targeting or regulatory subunits. PPP1R12A mediates binding to myosin. In terms of processing, phosphorylated by CIT (Rho-associated kinase) and by ROCK2 on serine and threonine residues. Phosphorylation at Thr-695 leads to inhibition of myosin phosphatase activity. Phosphorylation at Thr-850 abolishes myosin binding. May be phosphorylated at Thr-695 by DMPK; may inhibit the myosin phosphatase activity. As to expression, detected in brain, lung, aorta, heart, gizzard, stomach, oviduct, spleen, kidney and small intestine.

The protein localises to the cytoplasm. It localises to the cytoskeleton. The protein resides in the stress fiber. Functionally, regulates myosin phosphatase activity. The chain is Protein phosphatase 1 regulatory subunit 12A (PPP1R12A) from Gallus gallus (Chicken).